A 149-amino-acid chain; its full sequence is Large ribosomal subunit protein bL9 (149 aa).

This sequence belongs to the bacterial ribosomal protein bL9 family.

Binds to the 23S rRNA. The chain is Large ribosomal subunit protein bL9 from Chromobacterium violaceum (strain ATCC 12472 / DSM 30191 / JCM 1249 / CCUG 213 / NBRC 12614 / NCIMB 9131 / NCTC 9757 / MK).